Reading from the N-terminus, the 689-residue chain is Elongation factor G (689 aa).

The region spanning 9–283 (AKFRNIGIMA…AIIEFMPSPL (275 aa)) is the tr-type G domain. GTP-binding positions include 18–25 (AHIDAGKT), 82–86 (DTPGH), and 136–139 (NKMD).

This sequence belongs to the TRAFAC class translation factor GTPase superfamily. Classic translation factor GTPase family. EF-G/EF-2 subfamily.

It is found in the cytoplasm. Its function is as follows. Catalyzes the GTP-dependent ribosomal translocation step during translation elongation. During this step, the ribosome changes from the pre-translocational (PRE) to the post-translocational (POST) state as the newly formed A-site-bound peptidyl-tRNA and P-site-bound deacylated tRNA move to the P and E sites, respectively. Catalyzes the coordinated movement of the two tRNA molecules, the mRNA and conformational changes in the ribosome. The sequence is that of Elongation factor G from Clostridium botulinum (strain ATCC 19397 / Type A).